Reading from the N-terminus, the 447-residue chain is Phosphoglucosamine mutase (447 aa).

Residue serine 106 is the Phosphoserine intermediate of the active site. The Mg(2+) site is built by serine 106, aspartate 245, aspartate 247, and aspartate 249. Serine 106 carries the post-translational modification Phosphoserine.

Belongs to the phosphohexose mutase family. Mg(2+) is required as a cofactor. In terms of processing, activated by phosphorylation.

It catalyses the reaction alpha-D-glucosamine 1-phosphate = D-glucosamine 6-phosphate. Functionally, catalyzes the conversion of glucosamine-6-phosphate to glucosamine-1-phosphate. The protein is Phosphoglucosamine mutase of Cupriavidus metallidurans (strain ATCC 43123 / DSM 2839 / NBRC 102507 / CH34) (Ralstonia metallidurans).